We begin with the raw amino-acid sequence, 148 residues long: MEKTFVMVKPDGVQRQLIGEILLRFERKGLQLIGAKLMKVSEETAGEHYKEHNGKPFFGELVDFITSGPVFAMVWEGEDAIAVARQLIGKTNPKEALPGTIRGDFGMFVGKNIIHGSDSPESAAREINLFFKEDELVEDEKLMNQWIY.

Positions 9, 57, 85, 91, 102, and 112 each coordinate ATP. T91 is modified (phosphothreonine). The Pros-phosphohistidine intermediate role is filled by H115. S122 is modified (phosphoserine).

The protein belongs to the NDK family. Homotetramer. Mg(2+) is required as a cofactor.

It localises to the cytoplasm. It carries out the reaction a 2'-deoxyribonucleoside 5'-diphosphate + ATP = a 2'-deoxyribonucleoside 5'-triphosphate + ADP. It catalyses the reaction a ribonucleoside 5'-diphosphate + ATP = a ribonucleoside 5'-triphosphate + ADP. In terms of biological role, major role in the synthesis of nucleoside triphosphates other than ATP. The ATP gamma phosphate is transferred to the NDP beta phosphate via a ping-pong mechanism, using a phosphorylated active-site intermediate. The chain is Nucleoside diphosphate kinase from Bacillus licheniformis (strain ATCC 14580 / DSM 13 / JCM 2505 / CCUG 7422 / NBRC 12200 / NCIMB 9375 / NCTC 10341 / NRRL NRS-1264 / Gibson 46).